A 1679-amino-acid chain; its full sequence is Furin-like protease 2 (1679 aa).

Residues 1-10 (MSNTTRSSRV) are compositionally biased toward polar residues. The tract at residues 1 to 42 (MSNTTRSSRVTIGRIGTTPQITDPWSSGLEKQRPSRCGGPKS) is disordered. 3 N-linked (GlcNAc...) asparagine glycosylation sites follow: Asn3, Asn109, and Asn130. Residues 139–164 (VSSLHSSRRTNPPSSSSSSSSNVDVD) form a disordered region. The segment covering 147–160 (RTNPPSSSSSSSSN) has biased composition (low complexity). N-linked (GlcNAc...) asparagine glycosylation occurs at Asn205. The region spanning 383–705 (QWYLNGGAKD…YGLMDAGAMV (323 aa)) is the Peptidase S8 domain. Catalysis depends on Asp417, which acts as the Charge relay system. Residues 424–456 (HPDLAQNYDPEASFDINGNDSDPTPQDNGDNKH) form a disordered region. The segment covering 439-451 (INGNDSDPTPQDN) has biased composition (polar residues). Asn442 carries an N-linked (GlcNAc...) asparagine glycan. The active-site Charge relay system is His456. 2 disulfide bridges follow: Cys473–Cys629 and Cys565–Cys595. The N-linked (GlcNAc...) asparagine glycan is linked to Asn480. Ser637 (charge relay system) is an active-site residue. Residues 714–852 (VPPQHICKSR…QLIFYGTSTQ (139 aa)) form the P/Homo B domain. Cys720 and Cys748 are joined by a disulfide. A glycan (N-linked (GlcNAc...) asparagine) is linked at Asn927. FU repeat units lie at residues 961-1006 (KKIL…RSFP), 1009-1056 (VGIC…GYFE), 1060-1104 (NRTC…DTYE), 1107-1152 (DNKC…GFYA), 1156-1204 (RLEC…SEFY), 1208-1253 (EGQC…GFFV), 1256-1299 (GSLC…GYYS), 1301-1346 (RGIC…GFYK), 1348-1393 (DFGC…QYYD), and 1396-1443 (SATC…QTLA). N-linked (GlcNAc...) asparagine glycosylation is present at Asn1060. N-linked (GlcNAc...) asparagine glycosylation is present at Asn1181. N-linked (GlcNAc...) asparagine glycans are attached at residues Asn1274 and Asn1277. Asn1439 carries an N-linked (GlcNAc...) asparagine glycan. The chain crosses the membrane as a helical span at residues 1512–1532 (AIAVAICLLIITIFSIIFAVL). Residues 1533–1679 (QRNSNHVSRN…STTSRTNIRS (147 aa)) lie on the Cytoplasmic side of the membrane. The disordered stretch occupies residues 1660 to 1679 (TNAERKNHPSSTTSRTNIRS). Residues 1668–1679 (PSSTTSRTNIRS) are compositionally biased toward polar residues.

Belongs to the peptidase S8 family. Furin subfamily. Ca(2+) is required as a cofactor. As to expression, transient expression in a subset of central nervous system neurons during embryonic stages 12-13. Expression in developing tracheal tree from stage 13 to end of embryonic development.

It is found in the membrane. The enzyme catalyses Release of mature proteins from their proproteins by cleavage of -Arg-Xaa-Yaa-Arg-|-Zaa- bonds, where Xaa can be any amino acid and Yaa is Arg or Lys. Releases albumin, complement component C3 and von Willebrand factor from their respective precursors.. In terms of biological role, furin is likely to represent the ubiquitous endoprotease activity within constitutive secretory pathways and capable of cleavage at the RX(K/R)R consensus motif. The chain is Furin-like protease 2 (Fur2) from Drosophila melanogaster (Fruit fly).